A 197-amino-acid polypeptide reads, in one-letter code: dITP/XTP pyrophosphatase (197 aa).

Position 8-13 (8-13 (TGNAGK)) interacts with substrate. Positions 40 and 69 each coordinate Mg(2+). Aspartate 69 functions as the Proton acceptor in the catalytic mechanism. Substrate contacts are provided by residues serine 70, 154–157 (FGYD), lysine 177, and 182–183 (HR).

This sequence belongs to the HAM1 NTPase family. As to quaternary structure, homodimer. It depends on Mg(2+) as a cofactor.

It catalyses the reaction XTP + H2O = XMP + diphosphate + H(+). The catalysed reaction is dITP + H2O = dIMP + diphosphate + H(+). The enzyme catalyses ITP + H2O = IMP + diphosphate + H(+). Pyrophosphatase that catalyzes the hydrolysis of nucleoside triphosphates to their monophosphate derivatives, with a high preference for the non-canonical purine nucleotides XTP (xanthosine triphosphate), dITP (deoxyinosine triphosphate) and ITP. Seems to function as a house-cleaning enzyme that removes non-canonical purine nucleotides from the nucleotide pool, thus preventing their incorporation into DNA/RNA and avoiding chromosomal lesions. The polypeptide is dITP/XTP pyrophosphatase (rdgB) (Shigella flexneri).